We begin with the raw amino-acid sequence, 660 residues long: Acetyl-coenzyme A synthetase (660 aa).

CoA is bound by residues 197 to 200 (RGGK) and Thr-317. ATP is bound by residues 397–399 (GEP), 421–426 (DTWWQT), Asp-512, and Arg-528. Ser-536 lines the CoA pocket. Position 539 (Arg-539) interacts with ATP. 3 residues coordinate Mg(2+): Val-550, His-552, and Val-555. An N6-acetyllysine modification is found at Lys-625.

The protein belongs to the ATP-dependent AMP-binding enzyme family. Mg(2+) is required as a cofactor. Acetylated. Deacetylation by the SIR2-homolog deacetylase activates the enzyme.

It catalyses the reaction acetate + ATP + CoA = acetyl-CoA + AMP + diphosphate. Its function is as follows. Catalyzes the conversion of acetate into acetyl-CoA (AcCoA), an essential intermediate at the junction of anabolic and catabolic pathways. AcsA undergoes a two-step reaction. In the first half reaction, AcsA combines acetate with ATP to form acetyl-adenylate (AcAMP) intermediate. In the second half reaction, it can then transfer the acetyl group from AcAMP to the sulfhydryl group of CoA, forming the product AcCoA. In Burkholderia lata (strain ATCC 17760 / DSM 23089 / LMG 22485 / NCIMB 9086 / R18194 / 383), this protein is Acetyl-coenzyme A synthetase.